The primary structure comprises 2028 residues: Pecanex-like protein 3 (2028 aa).

The next 2 helical transmembrane spans lie at Cys-33–Leu-53 and Pro-54–Ile-74. Residue Asn-95 is glycosylated (N-linked (GlcNAc...) asparagine). The tract at residues Ser-96–Pro-116 is disordered. At Ser-127 the chain carries Phosphoserine. Residue Thr-129 is modified to Phosphothreonine. Disordered regions lie at residues Ile-193–Pro-239 and Leu-263–Arg-625. A compositionally biased stretch (pro residues) spans Gln-198–Ser-208. Basic and acidic residues-rich tracts occupy residues Leu-263–Cys-273 and Thr-305–Asn-319. An N-linked (GlcNAc...) asparagine glycan is attached at Asn-319. Thr-370 is subject to Phosphothreonine. 2 positions are modified to phosphoserine: Ser-392 and Ser-431. The span at Gly-427 to Arg-437 shows a compositional bias: polar residues. Residues Thr-444–Gln-459 show a composition bias toward low complexity. Residues Thr-488–Ala-497 are compositionally biased toward polar residues. Residues Ser-505 and Ser-521 each carry the phosphoserine modification. 7 helical membrane passes run Asn-793–Phe-815, Ile-819–Leu-836, Trp-852–Leu-872, Pro-880–Ala-900, Val-903–Val-923, Ser-946–Cys-968, and His-980–Ser-1000. Residue Ser-1025 is modified to Phosphoserine. 4 helical membrane-spanning segments follow: residues Leu-1053 to Ile-1073, Val-1078 to Leu-1098, Phe-1244 to Ala-1264, and Leu-1280 to Met-1300. The residue at position 1697 (Ser-1697) is a Phosphoserine. Residue Asn-1770 is glycosylated (N-linked (GlcNAc...) asparagine). Residues Gly-1845 to Tyr-2028 are disordered. Pro residues predominate over residues Arg-1890–Pro-1921. Phosphoserine is present on residues Ser-1909 and Ser-1955. The span at Pro-1966–Ser-1977 shows a compositional bias: low complexity. Residues Glu-1978–Asp-1987 are compositionally biased toward polar residues.

This sequence belongs to the pecanex family.

It localises to the membrane. The sequence is that of Pecanex-like protein 3 from Mus musculus (Mouse).